Reading from the N-terminus, the 509-residue chain is Dihydrolipoyl dehydrogenase, mitochondrial (509 aa).

A mitochondrion-targeting transit peptide spans 1 to 35; that stretch reads MQSWSRVYCSLAKRGHFNRISHGLQGLSAVPLRTY. At Lys-66 the chain carries N6-acetyllysine; alternate. Lys-66 is subject to N6-succinyllysine; alternate. Residues 71–80 and Lys-89 each bind FAD; that span reads EKNETLGGTC. Residues Cys-80 and Cys-85 are joined by a disulfide bond. An N6-acetyllysine; alternate mark is found at Lys-104, Lys-122, Lys-132, and Lys-143. 4 positions are modified to N6-succinyllysine; alternate: Lys-104, Lys-122, Lys-132, and Lys-143. Gly-154 lines the FAD pocket. 2 positions are modified to N6-succinyllysine: Lys-159 and Lys-166. An FAD-binding site is contributed by 183-185; it reads TGS. NAD(+) contacts are provided by residues 220 to 227 and Glu-243; that span reads GAGVIGVE. N6-succinyllysine occurs at positions 273 and 277. Residue Val-278 coordinates NAD(+). Phosphoserine occurs at positions 285 and 297. Gly-314 is a binding site for NAD(+). Lys-346 carries the post-translational modification N6-acetyllysine. FAD is bound by residues Asp-355 and 361-364; that span reads MLAH. Lys-410 is modified (N6-acetyllysine; alternate). Lys-410 carries the N6-succinyllysine; alternate modification. 2 positions are modified to N6-acetyllysine: Lys-417 and Lys-420. The residue at position 430 (Lys-430) is an N6-succinyllysine. His-487 functions as the Proton acceptor in the catalytic mechanism. Ser-502 bears the Phosphoserine mark. Lys-505 carries the N6-acetyllysine; alternate modification. Position 505 is an N6-succinyllysine; alternate (Lys-505).

Belongs to the class-I pyridine nucleotide-disulfide oxidoreductase family. Homodimer. Part of the multimeric pyruvate dehydrogenase complex that contains multiple copies of pyruvate dehydrogenase (subunits PDHA (PDHA1 or PDHA2) and PDHB, E1), dihydrolipoamide acetyltransferase (DLAT, E2) and lipoamide dehydrogenase (DLD, E3). These subunits are bound to an inner core composed of about 48 DLAT and 12 PDHX molecules (by non covalent bonds). The 2-oxoglutarate dehydrogenase complex is composed of OGDH (2-oxoglutarate dehydrogenase; E1), DLST (dihydrolipoamide succinyltransferase; E2), DLD (dihydrolipoamide dehydrogenase; E3) and the assembly factor KGD4. It contains multiple copies of the three enzymatic components (E1, E2 and E3). In the nucleus, the 2-oxoglutarate dehydrogenase complex associates with KAT2A. Interacts with PDHX. Requires FAD as cofactor. Post-translationally, tyrosine phosphorylated.

It is found in the mitochondrion matrix. It localises to the nucleus. The protein resides in the cell projection. The protein localises to the cilium. Its subcellular location is the flagellum. It is found in the cytoplasmic vesicle. It localises to the secretory vesicle. The protein resides in the acrosome. It carries out the reaction N(6)-[(R)-dihydrolipoyl]-L-lysyl-[protein] + NAD(+) = N(6)-[(R)-lipoyl]-L-lysyl-[protein] + NADH + H(+). Its function is as follows. Lipoamide dehydrogenase is a component of the glycine cleavage system as well as an E3 component of three alpha-ketoacid dehydrogenase complexes (pyruvate-, alpha-ketoglutarate-, and branched-chain amino acid-dehydrogenase complex). The 2-oxoglutarate dehydrogenase complex is mainly active in the mitochondrion. A fraction of the 2-oxoglutarate dehydrogenase complex also localizes in the nucleus and is required for lysine succinylation of histones: associates with KAT2A on chromatin and provides succinyl-CoA to histone succinyltransferase KAT2A. In monomeric form may have additional moonlighting function as serine protease. Involved in the hyperactivation of spermatazoa during capacitation and in the spermatazoal acrosome reaction. This Macaca fascicularis (Crab-eating macaque) protein is Dihydrolipoyl dehydrogenase, mitochondrial (DLD).